Here is a 713-residue protein sequence, read N- to C-terminus: Subtilisin-like protease SBT4.9 (713 aa).

The signal sequence occupies residues 1 to 24; the sequence is MARRADSFCLISCVLVSFVISVSA. Residues 25-113 constitute a propeptide, activation peptide; sequence VTDDSQDKQV…VFPDINYKLQ (89 aa). Residues 34–112 enclose the Inhibitor I9 domain; that stretch reads VYVVYMGSLP…SVFPDINYKL (79 aa). The Peptidase S8 domain maps to 117-560; sequence SWDFLGLKEG…AGHVDPIAAI (444 aa). The Charge relay system role is filled by Asp-145. A glycan (N-linked (GlcNAc...) asparagine) is linked at Asn-176. His-200 acts as the Charge relay system in catalysis. Asn-215 and Asn-223 each carry an N-linked (GlcNAc...) asparagine glycan. Residues 356–415 enclose the PA domain; it reads NYPLYGGSTDGPLLRGKILVSEDKVSSEIVVANINENYHDYAYVSILPSSALSKDDFDSV. Residue Asn-420 is glycosylated (N-linked (GlcNAc...) asparagine). The active-site Charge relay system is Ser-499. N-linked (GlcNAc...) asparagine glycosylation is found at Asn-536, Asn-583, Asn-627, and Asn-637.

Belongs to the peptidase S8 family. Post-translationally, the C-terminal propeptide is autocleaved.

The protein resides in the secreted. This chain is Subtilisin-like protease SBT4.9, found in Arabidopsis thaliana (Mouse-ear cress).